The primary structure comprises 365 residues: Chorismate synthase (365 aa).

R48 provides a ligand contact to NADP(+). FMN is bound by residues 125–127 (RGS), G286, 301–305 (KPTPS), and R328.

It belongs to the chorismate synthase family. FMNH2 is required as a cofactor.

It carries out the reaction 5-O-(1-carboxyvinyl)-3-phosphoshikimate = chorismate + phosphate. The protein operates within metabolic intermediate biosynthesis; chorismate biosynthesis; chorismate from D-erythrose 4-phosphate and phosphoenolpyruvate: step 7/7. Its function is as follows. Catalyzes the anti-1,4-elimination of the C-3 phosphate and the C-6 proR hydrogen from 5-enolpyruvylshikimate-3-phosphate (EPSP) to yield chorismate, which is the branch point compound that serves as the starting substrate for the three terminal pathways of aromatic amino acid biosynthesis. This reaction introduces a second double bond into the aromatic ring system. The sequence is that of Chorismate synthase from Methanosphaera stadtmanae (strain ATCC 43021 / DSM 3091 / JCM 11832 / MCB-3).